A 456-amino-acid chain; its full sequence is Cysteine--tRNA ligase (456 aa).

Cys-28 lines the Zn(2+) pocket. The 'HIGH' region motif lies at 30-40 (ITVYDHCHLGH). Zn(2+) contacts are provided by Cys-209, His-234, and Glu-238. The 'KMSKS' region motif lies at 266-270 (KMAKS). Lys-269 contacts ATP.

This sequence belongs to the class-I aminoacyl-tRNA synthetase family. Monomer. Requires Zn(2+) as cofactor.

The protein resides in the cytoplasm. The catalysed reaction is tRNA(Cys) + L-cysteine + ATP = L-cysteinyl-tRNA(Cys) + AMP + diphosphate. This chain is Cysteine--tRNA ligase, found in Legionella pneumophila subsp. pneumophila (strain Philadelphia 1 / ATCC 33152 / DSM 7513).